Consider the following 3149-residue polypeptide: Large tegument protein deneddylase (3149 aa).

Residues 1–13 are compositionally biased toward polar residues; sequence MSNGDWGQSQRTR. A disordered region spans residues 1-30; sequence MSNGDWGQSQRTRGTGPVRGIRTMDVNAPG. The interval 1-268 is deubiquitination activity; sequence MSNGDWGQSQ…YEANGSGFDL (268 aa). In terms of domain architecture, Peptidase C76 spans 41–258; sequence LGTASCNQAH…MLEHYGVYDF (218 aa). Active-site residues include Cys-61, Asp-193, and His-195. The segment at 319 to 341 is disordered; sequence PAARYSPAKTNSPPSSPASAAPA. Repeat copies occupy residues 335–339, 340–344, 345–349, 350–354, 355–359, 360–364, 365–369, and 370–374. Positions 335–374 are 8 X 5 AA repeats of P-A-S-A-A; the sequence is PASAAPASAAPASAAPASAAPASAAPASAAPASAAPASAA. 8 disordered regions span residues 382 to 656, 901 to 923, 1143 to 1166, 1412 to 1434, 1644 to 1677, 2583 to 2839, 2852 to 2981, and 2995 to 3019; these read FIPI…GSGL, LLSGGDQEAGEGGGEPEDNSIYR, APISPASPSATPANHDNPEATPPL, GRKEKEKLREQEDKERQERRARE, PEATNDPGQANLPPPPTIPQATAPPRLASDSALW, GLVS…PTAV, AAAS…PGAR, and QTYTVRKEAPPSAASQLPKMPKCKD. The segment covering 462 to 483 has biased composition (pro residues); sequence LPPPVIPIPHQSPPASPTPHPA. 2 stretches are compositionally biased toward low complexity: residues 509 to 536 and 544 to 564; these read AAPSNPKIPLTTPSPSPTAAAAPTTTTL and QPPQSAAPAPSPLLPQQQPTP. Residues 554–584 are interaction with inner tegument protein; the sequence is SPLLPQQQPTPSAAPAPSPLLPQQQPPPSAA. A compositionally biased stretch (pro residues) spans 565–609; the sequence is SAAPAPSPLLPQQQPPPSAARAPSPLPPQQQPLPSATPAPPPAQQ. Positions 1143 to 1155 are enriched in low complexity; it reads APISPASPSATPA. Polar residues predominate over residues 2592–2603; sequence SADNTPASSDRL. Positions 2711-2720 are enriched in pro residues; sequence QPAPQQPPSS. Polar residues-rich tracts occupy residues 2734–2745 and 2784–2804; these read SPHSTPSTASGS and SAASLTTFGLQPQDTQASSQD. Positions 2812–2827 are enriched in basic and acidic residues; it reads MQREKKQQGGREEAAE. Residues 2874–2885 show a composition bias toward low complexity; that stretch reads APALGSGLAAPA.

This sequence belongs to the herpesviridae large tegument protein family. Interacts with host CUL1 and CUL4A; these interactions inhibit the E3 ligase activity of cullins. Interacts with inner tegument protein. Interacts with capsid vertex specific component CVC2. Interacts with the major capsid protein/MCP. Interacts with host TRIM25 and YWHAZ.

The protein resides in the virion tegument. Its subcellular location is the host cytoplasm. It localises to the host nucleus. It catalyses the reaction Thiol-dependent hydrolysis of ester, thioester, amide, peptide and isopeptide bonds formed by the C-terminal Gly of ubiquitin (a 76-residue protein attached to proteins as an intracellular targeting signal).. Its function is as follows. Large tegument protein that plays multiple roles in the viral cycle. During viral entry, remains associated with the capsid while most of the tegument is detached and participates in the capsid transport toward the host nucleus. Plays a role in the routing of the capsid at the nuclear pore complex and subsequent uncoating. Within the host nucleus, acts as a deneddylase and promotes the degradation of nuclear CRLs (cullin-RING ubiquitin ligases) and thereby stabilizes nuclear CRL substrates, while cytoplasmic CRLs remain unaffected. These modifications prevent host cell cycle S-phase progression and create a favorable environment allowing efficient viral genome replication. Participates later in the secondary envelopment of capsids. Indeed, plays a linker role for the association of the outer viral tegument to the capsids together with the inner tegument protein. Counteracts host TLR-mediated NF-kappa-B activation through both MYD88 and TICAM1-dependent pathways by interfering with 'Lys-63'- and 'Lys-48'-linked ubiquitination of signaling intermediates such as TRAF6 and IKBKG. Inhibits type I interferon production by forming a tri-molecular complex with host TRIM25 and 14-3-3 thereby promoting TRIM25 autoubiquitination and sequestration of the ligase into inactive protein aggregates. In turn, host RIGI is recruited to the complex but ubiquitination is severely impaired leading to inhibition of the pathway. Also catalyzes the removal of 'Lys-48'- and 'Lys-63'-linked ubiquitin chains on host TBK1 and STING1 suppressing cGAS-STING signaling in addition to the RIGI-MAVS pathway. Inhibits selective autophagy by deubiquitinating host SQSTM1. In turn, decreased SQSTM1 ubiquitination fails to recruit LC3 to SQSTM1-positive aggregates. In the host nucleus, deubiquitinates topoisomerase II subunits TOP2A and TOP2B thereby stabilizing SUMOylated TOP2 which halts the DNA damage response to TOP2-induced double strand DNA breaks and promotes cell survival. This is Large tegument protein deneddylase from Epstein-Barr virus (strain B95-8) (HHV-4).